The primary structure comprises 259 residues: MVFRKSLLKLAVFALGACVAFSNANAAEGKLESIKSKGQLIVGVKNDVPHYALLDQATGEIKGFEVDVAKLLAKSILGDDKKIKLVAVNAKTRGPLLDNGSVDAVIATFTITPERKRIYNFSEPYYQDAIGLLVLKEKKYKSLADMKGANIGVAQAATTKKAIGEAAKKIGIDVKFSEFPDYPSIKAALDAKRVDAFSVDKSILLGYVDDKSEILPDSFEPQSYGIVTKKDDPAFAKYVDDFVKEHKNEIDALAKKWGL.

An N-terminal signal peptide occupies residues 1-26 (MVFRKSLLKLAVFALGACVAFSNANA).

Belongs to the bacterial solute-binding protein 3 family.

It localises to the cell surface. Functionally, common antigen and a major cell adherence molecule. Most probably involved, with PEB1C, in a binding-protein-dependent transport system for an amino acid. May be involved in binding to intestinal cells. This chain is Major cell-binding factor (peb1A), found in Campylobacter jejuni subsp. jejuni serotype O:2 (strain ATCC 700819 / NCTC 11168).